A 325-amino-acid chain; its full sequence is Ribonuclease Z (325 aa).

Zn(2+) contacts are provided by H63, H65, D67, H68, H147, D218, and H276. D67 functions as the Proton acceptor in the catalytic mechanism.

Belongs to the RNase Z family. As to quaternary structure, homodimer. The cofactor is Zn(2+).

It catalyses the reaction Endonucleolytic cleavage of RNA, removing extra 3' nucleotides from tRNA precursor, generating 3' termini of tRNAs. A 3'-hydroxy group is left at the tRNA terminus and a 5'-phosphoryl group is left at the trailer molecule.. Its function is as follows. Zinc phosphodiesterase, which displays some tRNA 3'-processing endonuclease activity. Probably involved in tRNA maturation, by removing a 3'-trailer from precursor tRNA. This chain is Ribonuclease Z, found in Oenococcus oeni (strain ATCC BAA-331 / PSU-1).